The sequence spans 158 residues: Large ribosomal subunit protein eL24 (158 aa).

The segment covering 98–146 (LDASHKKAEAEKAVRELKQKKANDIEKKRADRKLQGKDVKAAKKAETKK) has biased composition (basic and acidic residues). The interval 98-158 (LDASHKKAEA…QPVGAKGGKK (61 aa)) is disordered.

This sequence belongs to the eukaryotic ribosomal protein eL24 family.

This Tetrahymena thermophila (strain SB210) protein is Large ribosomal subunit protein eL24 (RPL24).